Here is a 284-residue protein sequence, read N- to C-terminus: 2,3,4,5-tetrahydropyridine-2,6-dicarboxylate N-succinyltransferase (284 aa).

Substrate is bound by residues R111 and D148.

It belongs to the transferase hexapeptide repeat family. Homotrimer.

Its subcellular location is the cytoplasm. It carries out the reaction (S)-2,3,4,5-tetrahydrodipicolinate + succinyl-CoA + H2O = (S)-2-succinylamino-6-oxoheptanedioate + CoA. It participates in amino-acid biosynthesis; L-lysine biosynthesis via DAP pathway; LL-2,6-diaminopimelate from (S)-tetrahydrodipicolinate (succinylase route): step 1/3. The protein is 2,3,4,5-tetrahydropyridine-2,6-dicarboxylate N-succinyltransferase of Agrobacterium fabrum (strain C58 / ATCC 33970) (Agrobacterium tumefaciens (strain C58)).